The following is a 407-amino-acid chain: Elongation factor Tu (407 aa).

Residues 10 to 217 enclose the tr-type G domain; that stretch reads KPHVNVGTIG…TLDTYIPDPE (208 aa). The interval 19–26 is G1; sequence GHVDHGKT. Residue 19 to 26 participates in GTP binding; the sequence is GHVDHGKT. Thr26 contributes to the Mg(2+) binding site. The G2 stretch occupies residues 60–64; that stretch reads GITIS. The interval 81–84 is G3; that stretch reads DCPG. GTP contacts are provided by residues 81–85 and 136–139; these read DCPGH and NKSD. The interval 136–139 is G4; the sequence is NKSD. The G5 stretch occupies residues 184 to 186; the sequence is SAL.

Belongs to the TRAFAC class translation factor GTPase superfamily. Classic translation factor GTPase family. EF-Tu/EF-1A subfamily. As to quaternary structure, monomer.

It is found in the cytoplasm. It catalyses the reaction GTP + H2O = GDP + phosphate + H(+). Functionally, GTP hydrolase that promotes the GTP-dependent binding of aminoacyl-tRNA to the A-site of ribosomes during protein biosynthesis. In Marinomonas sp. (strain MWYL1), this protein is Elongation factor Tu.